The following is a 782-amino-acid chain: Translation initiation factor IF-2 (782 aa).

The disordered stretch occupies residues 47–196 (DNAIDGTNKK…TPPKPKELPE (150 aa)). Positions 53-65 (TNKKAEAPKKETT) are enriched in basic and acidic residues. The segment covering 66 to 81 (SNENGNSKGPNKPNMT) has biased composition (polar residues). The span at 82 to 93 (NSNEKSNKPNKP) shows a compositional bias: low complexity. A compositionally biased stretch (polar residues) spans 115-129 (KPANTSNQTQSSGNK). The span at 133-170 (GGQKRNNNNNSNRPGGGNPNRPGGNNRPNRGGNFNNKG) shows a compositional bias: low complexity. In terms of domain architecture, tr-type G spans 283-452 (ERPPVVTIMG…LLVSEVEELK (170 aa)). The interval 292–299 (GHVDHGKT) is G1. 292–299 (GHVDHGKT) is a GTP binding site. The segment at 317–321 (GITQH) is G2. The tract at residues 338–341 (DTPG) is G3. Residues 338–342 (DTPGH) and 392–395 (NKID) contribute to the GTP site. Residues 392–395 (NKID) are G4. Positions 428–430 (SAK) are G5.

This sequence belongs to the TRAFAC class translation factor GTPase superfamily. Classic translation factor GTPase family. IF-2 subfamily.

It is found in the cytoplasm. Functionally, one of the essential components for the initiation of protein synthesis. Protects formylmethionyl-tRNA from spontaneous hydrolysis and promotes its binding to the 30S ribosomal subunits. Also involved in the hydrolysis of GTP during the formation of the 70S ribosomal complex. The sequence is that of Translation initiation factor IF-2 from Listeria innocua serovar 6a (strain ATCC BAA-680 / CLIP 11262).